The sequence spans 365 residues: Growth-regulating factor 7 (365 aa).

Residues 59 to 94 enclose the QLQ domain; that stretch reads PFTNAQLKELERQAMIYKYMIASIPVPFDLLVSSPS. In terms of domain architecture, WRC spans 107-151; it reads DLEPGRCRRTDGKKWRCAKEVVSNHKYCEKHLHRGRPRSRKHVEP. 2 consecutive short sequence motifs (bipartite nuclear localization signal) follow at residues 112–122 and 140–147; these read RCRRTDGKKWR and RGRPRSRK. Residues 137–147 are compositionally biased toward basic residues; that stretch reads HLHRGRPRSRK. Disordered regions lie at residues 137 to 187 and 332 to 365; these read HLHR…TLEP and IESY…SSQV. Over residues 337 to 365 the composition is skewed to polar residues; sequence LMETPTPSSSPSRVMKKMTSSVSDESSQV.

Belongs to the GRF family.

Its subcellular location is the nucleus. In terms of biological role, transcription activator that plays a role in the regulation of cell expansion in leaf and cotyledons tissues. Component of a network formed by miR396, the GRFs and their interacting factors (GIFs) acting in the regulation of meristem function, at least partially through the control of cell proliferation. The polypeptide is Growth-regulating factor 7 (GRF7) (Arabidopsis thaliana (Mouse-ear cress)).